We begin with the raw amino-acid sequence, 869 residues long: Valine--tRNA ligase (869 aa).

The 'HIGH' region signature appears at proline 51–histidine 61. The 'KMSKS' region motif lies at lysine 523 to serine 527. Lysine 526 serves as a coordination point for ATP. Residues glutamate 797–lysine 869 are a coiled coil.

This sequence belongs to the class-I aminoacyl-tRNA synthetase family. ValS type 1 subfamily. As to quaternary structure, monomer.

The protein localises to the cytoplasm. The catalysed reaction is tRNA(Val) + L-valine + ATP = L-valyl-tRNA(Val) + AMP + diphosphate. Catalyzes the attachment of valine to tRNA(Val). As ValRS can inadvertently accommodate and process structurally similar amino acids such as threonine, to avoid such errors, it has a 'posttransfer' editing activity that hydrolyzes mischarged Thr-tRNA(Val) in a tRNA-dependent manner. The polypeptide is Valine--tRNA ligase (Malacoplasma penetrans (strain HF-2) (Mycoplasma penetrans)).